The sequence spans 633 residues: UvrABC system protein C (633 aa).

The region spanning 37–115 (PKPGVYRMFG…IKSLKPRFNI (79 aa)) is the GIY-YIG domain. Residues 225-260 (NALREDLQTRMAQASEAMDFETAAKLRDRIRAIAAV) enclose the UVR domain.

Belongs to the UvrC family. In terms of assembly, interacts with UvrB in an incision complex.

Its subcellular location is the cytoplasm. In terms of biological role, the UvrABC repair system catalyzes the recognition and processing of DNA lesions. UvrC both incises the 5' and 3' sides of the lesion. The N-terminal half is responsible for the 3' incision and the C-terminal half is responsible for the 5' incision. The polypeptide is UvrABC system protein C (Maricaulis maris (strain MCS10) (Caulobacter maris)).